The sequence spans 359 residues: MIVIDGSIGEGGGQILRTTLALAALLGKPVRIVNIRAKRPRPGLQRQHLTSVKAVAELASARVEGLELGSTTLVFIPRGLRSGRFYFNIGTAGSITLVLQALLPVTAFAPGPVEVEIVGGTDVPWSPPIDYVRFVLRKLLAMFGFEFEIIVKRRGHYPRGGGRVVLRVTQPPHVLKPVKLEERGKVLRVEGLSHAVRLPRHVAERQARSAEAVLRSKLPGVPISIDLEWYEPSRDPHLGPGSGVVVWAVAEHSVLGSDSLGAKGKPAEAVGREAAEKLLEDLATGTALDRHASDMLIPYAALACGESILGGARLTMHAWTNIEVVKMLVPGAEMEFIEGGKLNEKFKLRVKGICYKPSS.

Residues glutamine 100 and 291–294 (HASD) each bind ATP. The Tele-AMP-histidine intermediate role is filled by histidine 317.

Belongs to the RNA 3'-terminal cyclase family. Type 1 subfamily.

Its subcellular location is the cytoplasm. It carries out the reaction a 3'-end 3'-phospho-ribonucleotide-RNA + ATP = a 3'-end 2',3'-cyclophospho-ribonucleotide-RNA + AMP + diphosphate. Functionally, catalyzes the conversion of 3'-phosphate to a 2',3'-cyclic phosphodiester at the end of RNA. The mechanism of action of the enzyme occurs in 3 steps: (A) adenylation of the enzyme by ATP; (B) transfer of adenylate to an RNA-N3'P to produce RNA-N3'PP5'A; (C) and attack of the adjacent 2'-hydroxyl on the 3'-phosphorus in the diester linkage to produce the cyclic end product. The biological role of this enzyme is unknown but it is likely to function in some aspects of cellular RNA processing. This Hyperthermus butylicus (strain DSM 5456 / JCM 9403 / PLM1-5) protein is RNA 3'-terminal phosphate cyclase.